We begin with the raw amino-acid sequence, 459 residues long: Mitochondrial distribution and morphology protein 10 (459 aa).

This sequence belongs to the MDM10 family. Component of the ER-mitochondria encounter structure (ERMES) or MDM complex, composed of MMM1, MDM10, MDM12 and MDM34. Associates with the mitochondrial outer membrane sorting assembly machinery SAM(core) complex.

It localises to the mitochondrion outer membrane. In terms of biological role, component of the ERMES/MDM complex, which serves as a molecular tether to connect the endoplasmic reticulum and mitochondria. Components of this complex are involved in the control of mitochondrial shape and protein biogenesis and may function in phospholipid exchange. MDM10 is involved in the late assembly steps of the general translocase of the mitochondrial outer membrane (TOM complex). Functions in the TOM40-specific route of the assembly of outer membrane beta-barrel proteins, including the association of TOM40 with the receptor TOM22 and small TOM proteins. Can associate with the SAM(core) complex as well as the MDM12-MMM1 complex, both involved in late steps of the major beta-barrel assembly pathway, that is responsible for biogenesis of all outer membrane beta-barrel proteins. May act as a switch that shuttles between both complexes and channels precursor proteins into the TOM40-specific pathway. Plays a role in mitochondrial morphology and in the inheritance of mitochondria. The chain is Mitochondrial distribution and morphology protein 10 from Clavispora lusitaniae (strain ATCC 42720) (Yeast).